The primary structure comprises 112 residues: Probable fatty acid-binding protein (112 aa).

The protein belongs to the calycin superfamily. Fatty-acid binding protein (FABP) family.

This chain is Probable fatty acid-binding protein, found in Anopheles gambiae (African malaria mosquito).